Reading from the N-terminus, the 157-residue chain is Protein MG115 (157 aa).

It belongs to the CinA family.

In Mycoplasma genitalium (strain ATCC 33530 / DSM 19775 / NCTC 10195 / G37) (Mycoplasmoides genitalium), this protein is Protein MG115.